The sequence spans 251 residues: Hydroxyacylglutathione hydrolase (251 aa).

The Zn(2+) site is built by histidine 53, histidine 55, aspartate 57, histidine 58, histidine 110, aspartate 127, and histidine 165.

This sequence belongs to the metallo-beta-lactamase superfamily. Glyoxalase II family. Monomer. Requires Zn(2+) as cofactor.

It catalyses the reaction an S-(2-hydroxyacyl)glutathione + H2O = a 2-hydroxy carboxylate + glutathione + H(+). The protein operates within secondary metabolite metabolism; methylglyoxal degradation; (R)-lactate from methylglyoxal: step 2/2. Its function is as follows. Thiolesterase that catalyzes the hydrolysis of S-D-lactoyl-glutathione to form glutathione and D-lactic acid. In Salmonella gallinarum (strain 287/91 / NCTC 13346), this protein is Hydroxyacylglutathione hydrolase.